A 191-amino-acid chain; its full sequence is Ureidoglycolate lyase (191 aa).

The protein belongs to the ureidoglycolate lyase family. In terms of assembly, homodimer.

It catalyses the reaction (S)-ureidoglycolate = urea + glyoxylate. It functions in the pathway nitrogen metabolism; (S)-allantoin degradation. Functionally, catalyzes the catabolism of the allantoin degradation intermediate (S)-ureidoglycolate, generating urea and glyoxylate. Involved in the utilization of allantoin as secondary nitrogen source when primary sources are limiting. The sequence is that of Ureidoglycolate lyase from Schizosaccharomyces pombe (strain 972 / ATCC 24843) (Fission yeast).